We begin with the raw amino-acid sequence, 940 residues long: DNA gyrase subunit A (940 aa).

A disordered region spans residues 1-22; the sequence is MSDHTNPPSAPPDDDPNGGSLL. The Topo IIA-type catalytic domain occupies 48–538; the sequence is LPDARDGLKP…SLADQDDESL (491 aa). Tyr136 serves as the catalytic O-(5'-phospho-DNA)-tyrosine intermediate. The short motif at 565 to 571 is the GyrA-box element; the sequence is QHRGGRG. The span at 914-924 shows a compositional bias: acidic residues; the sequence is ESVDDNGDDAD. A disordered region spans residues 914–940; the sequence is ESVDDNGDDADSVAPAAPDGQVTDSDD.

It belongs to the type II topoisomerase GyrA/ParC subunit family. In terms of assembly, heterotetramer, composed of two GyrA and two GyrB chains. In the heterotetramer, GyrA contains the active site tyrosine that forms a transient covalent intermediate with DNA, while GyrB binds cofactors and catalyzes ATP hydrolysis.

It localises to the cytoplasm. The enzyme catalyses ATP-dependent breakage, passage and rejoining of double-stranded DNA.. Its function is as follows. A type II topoisomerase that negatively supercoils closed circular double-stranded (ds) DNA in an ATP-dependent manner to modulate DNA topology and maintain chromosomes in an underwound state. Negative supercoiling favors strand separation, and DNA replication, transcription, recombination and repair, all of which involve strand separation. Also able to catalyze the interconversion of other topological isomers of dsDNA rings, including catenanes and knotted rings. Type II topoisomerases break and join 2 DNA strands simultaneously in an ATP-dependent manner. This is DNA gyrase subunit A from Granulibacter bethesdensis (strain ATCC BAA-1260 / CGDNIH1).